The sequence spans 365 residues: MSSSFGKIFRVSTFGESHGGAVGVILDGCPPKLKVDINMIQNELDRRRPGQSDITTPRNEEDKIEILSGIKEGLTLGTPIAMLVRNKDQRPRDYDNLDQVFRPSHADGTYHLKYGIQASSGGGRASARETIGRVAAGAVAKQLLKNFCNTEILSWVKRIHDIDSDINKEKISLNKIDSNIVRCPDEKISAEMIERIKQLKRQGDSCGGVIECLVKNVPSGLGMPVFDKLEADLAKALMSLPATKGFEIGSGFSGTYLKGSEHNDAFIKSDDIRKLRTISNNSGGIQGGISNGENIEMKIAFKPTATIGKEQKTVNAEGKEVLMRAKGRHDPCVLPRAVPMVDAMVALVLVDHLLLNQAQCGLIDN.

R47 contacts NADP(+). Residues 124–126, G287, 302–306, and R328 contribute to the FMN site; these read RAS and KPTAT.

This sequence belongs to the chorismate synthase family. Homotetramer. It depends on FMNH2 as a cofactor.

It catalyses the reaction 5-O-(1-carboxyvinyl)-3-phosphoshikimate = chorismate + phosphate. It functions in the pathway metabolic intermediate biosynthesis; chorismate biosynthesis; chorismate from D-erythrose 4-phosphate and phosphoenolpyruvate: step 7/7. Its function is as follows. Catalyzes the anti-1,4-elimination of the C-3 phosphate and the C-6 proR hydrogen from 5-enolpyruvylshikimate-3-phosphate (EPSP) to yield chorismate, which is the branch point compound that serves as the starting substrate for the three terminal pathways of aromatic amino acid biosynthesis. This reaction introduces a second double bond into the aromatic ring system. This Prochlorococcus marinus (strain MIT 9215) protein is Chorismate synthase.